A 592-amino-acid chain; its full sequence is Potassium-transporting ATPase potassium-binding subunit (592 aa).

The next 13 membrane-spanning stretches (helical) occupy residues 6-26, 67-87, 136-156, 179-199, 283-303, 312-332, 359-379, 389-409, 411-431, 450-470, 489-511, 519-539, and 559-579; these read WLET…FGTY, ACAM…MLLL, GFAV…IAAI, LYIL…QGVI, LSNI…TYTF, QGWA…GVFY, FGLA…CGAV, IGGM…GGVG, GLYT…LMIG, ITTV…AMIL, LYAF…GNTL, VAML…AGGL, and FALW…FPAL.

Belongs to the KdpA family. In terms of assembly, the system is composed of three essential subunits: KdpA, KdpB and KdpC.

The protein localises to the cell inner membrane. In terms of biological role, part of the high-affinity ATP-driven potassium transport (or Kdp) system, which catalyzes the hydrolysis of ATP coupled with the electrogenic transport of potassium into the cytoplasm. This subunit binds the periplasmic potassium ions and delivers the ions to the membrane domain of KdpB through an intramembrane tunnel. This Geotalea uraniireducens (strain Rf4) (Geobacter uraniireducens) protein is Potassium-transporting ATPase potassium-binding subunit.